The following is a 420-amino-acid chain: ATP phosphoribosyltransferase regulatory subunit (420 aa).

The protein belongs to the class-II aminoacyl-tRNA synthetase family. HisZ subfamily. In terms of assembly, heteromultimer composed of HisG and HisZ subunits.

The protein localises to the cytoplasm. It participates in amino-acid biosynthesis; L-histidine biosynthesis; L-histidine from 5-phospho-alpha-D-ribose 1-diphosphate: step 1/9. In terms of biological role, required for the first step of histidine biosynthesis. May allow the feedback regulation of ATP phosphoribosyltransferase activity by histidine. This is ATP phosphoribosyltransferase regulatory subunit from Bacillus cereus (strain G9842).